The sequence spans 390 residues: Protein-glutamate methylesterase/protein-glutamine glutaminase (390 aa).

In terms of domain architecture, Response regulatory spans 4-121 (RALVVDDSGF…SGDMEQVKRQ (118 aa)). 4-aspartylphosphate is present on D55. The tract at residues 130–198 (GGGRGAPAGR…AAPAPERGQR (69 aa)) is disordered. Composition is skewed to low complexity over residues 136–148 (PAGR…APVD) and 179–193 (EAPV…APAP). Residues 201-390 (PGALRLVVIG…QVGEELAKLR (190 aa)) enclose the CheB-type methylesterase domain. Active-site residues include S212, H239, and D335.

Belongs to the CheB family. Phosphorylated by CheA. Phosphorylation of the N-terminal regulatory domain activates the methylesterase activity.

It localises to the cytoplasm. It carries out the reaction [protein]-L-glutamate 5-O-methyl ester + H2O = L-glutamyl-[protein] + methanol + H(+). The catalysed reaction is L-glutaminyl-[protein] + H2O = L-glutamyl-[protein] + NH4(+). Functionally, involved in chemotaxis. Part of a chemotaxis signal transduction system that modulates chemotaxis in response to various stimuli. Catalyzes the demethylation of specific methylglutamate residues introduced into the chemoreceptors (methyl-accepting chemotaxis proteins or MCP) by CheR. Also mediates the irreversible deamidation of specific glutamine residues to glutamic acid. In Alkalilimnicola ehrlichii (strain ATCC BAA-1101 / DSM 17681 / MLHE-1), this protein is Protein-glutamate methylesterase/protein-glutamine glutaminase.